Here is a 108-residue protein sequence, read N- to C-terminus: Cytochrome c oxidase subunit 1 (108 aa).

Residues 10–30 (AFVAPVLGLLGFIPGGAGGIV) traverse the membrane as a helical segment. H49 serves as a coordination point for heme a3. Transmembrane regions (helical) follow at residues 50-70 (FHLQVASLVTLTAMGSLYWLL) and 85-105 (LGLAVVWLWFLGMMIMAVGLH). H51 lines the Fe(II)-heme a pocket.

It belongs to the heme-copper respiratory oxidase family. It depends on heme as a cofactor. Cu cation is required as a cofactor.

It localises to the cell membrane. It carries out the reaction 4 Fe(II)-[cytochrome c] + O2 + 8 H(+)(in) = 4 Fe(III)-[cytochrome c] + 2 H2O + 4 H(+)(out). It participates in energy metabolism; oxidative phosphorylation. This is Cytochrome c oxidase subunit 1 (cbaA) from Thermus thermophilus.